The sequence spans 528 residues: Butyrophilin subfamily 2 member A2 (528 aa).

An N-terminal signal peptide occupies residues 1–29 (MESAAALHFSRPASLLLLLLLSLCALVSA). Residues 30–249 (QVTVVGPTDP…SFMPSVSPCA (220 aa)) are Extracellular-facing. The 112-residue stretch at 31–142 (VTVVGPTDPI…SYDEAILHLI (112 aa)) folds into the Ig-like V-type domain. 3 N-linked (GlcNAc...) asparagine glycosylation sites follow: asparagine 47, asparagine 115, and asparagine 121. Cysteine 52 and cysteine 126 form a disulfide bridge. The Ig-like C2-type domain occupies 150 to 232 (PLIEMRGHED…NNTLLSQKKE (83 aa)). A helical membrane pass occupies residues 250 to 270 (VALPIVVVILMILFAVCMYWI). Residues 270 to 320 (INKLQKEKKILSGEKEFERETREIAVKELEKERVQKEEELQVKEKLQEELR) adopt a coiled-coil conformation. At 271 to 528 (NKLQKEKKIL…LHRVGTHQSL (258 aa)) the chain is on the cytoplasmic side. The B30.2/SPRY domain occupies 311–507 (VKEKLQEELR…IFICPALTGA (197 aa)).

Belongs to the immunoglobulin superfamily. BTN/MOG family. Post-translationally, N-glycosylated.

Its subcellular location is the membrane. Its function is as follows. Inhibits the proliferation of CD4 and CD8 T-cells activated by anti-CD3 antibodies, T-cell metabolism and IL2 and IFNG secretion. This Pongo abelii (Sumatran orangutan) protein is Butyrophilin subfamily 2 member A2 (BTN2A2).